A 431-amino-acid polypeptide reads, in one-letter code: Transposase for insertion sequence element IS232 (431 aa).

Residues 20–79 (PNFKKLMGNLKMKINKSQLARELNVDRRTIDKYLNGFTPKGTKNKTSKIDTYYEVIAALL) enclose the HTH IS21-type domain. Positions 35-54 (KSQLARELNVDRRTIDKYLN) form a DNA-binding region, H-T-H motif. One can recognise an Integrase catalytic domain in the interval 140-315 (YETPPGEQAQ…IPVFALKQEK (176 aa)).

Belongs to the transposase IS21/IS408/IS1162 family.

In terms of biological role, involved in the transposition of the insertion sequence. The protein is Transposase for insertion sequence element IS232 of Bacillus thuringiensis subsp. berliner.